The primary structure comprises 1331 residues: X-linked retinitis pigmentosa GTPase regulator-interacting protein 1 (1331 aa).

Disordered regions lie at residues 1 to 165, 183 to 220, and 351 to 374; these read MQHL…PPAF, SQLTHTMTTDSTHVEEIPRSPEKTSKVEKPEQRSSEEC, and HQPLDSSHQPHWSTELTGKQLPPQ. The segment covering 41-67 has biased composition (basic and acidic residues); sequence NQKELNCRRLHLHEEPTLVKEPSPKQR. 2 stretches are compositionally biased toward polar residues: residues 77–86 and 183–193; these read VQRSTTTQPD and SQLTHTMTTDS. Over residues 194-220 the composition is skewed to basic and acidic residues; it reads THVEEIPRSPEKTSKVEKPEQRSSEEC. 2 coiled-coil regions span residues 236–352 and 498–546; these read ELIR…SSHQ and MCYQ…LRSH. Residues 351–367 show a composition bias toward polar residues; the sequence is HQPLDSSHQPHWSTELT. Residues 745-870 enclose the C2 domain; the sequence is GARKVQSNES…AQNKSIKGDF (126 aa). Disordered regions lie at residues 899–1057 and 1088–1146; these read FQMS…VQDK and AEDG…SDDI. A coiled-coil region spans residues 908 to 999; it reads EGEEKEEEGG…DVLEASFTEE (92 aa). Residues 910–988 show a composition bias toward acidic residues; it reads EEKEEEGGEE…EEEEEEEDEN (79 aa). 2 stretches are compositionally biased toward basic and acidic residues: residues 1022–1039 and 1088–1115; these read PEKRKPPVIAEKKEREHQ and AEDGGLKAQDKREEPPSPRSALRQEHPS. Residues 1129–1141 are compositionally biased toward polar residues; the sequence is CEQASEVSETQTT. Residues 1136-1326 form an interaction with RPGR region; sequence SETQTTDSDD…ALHGIYKEMT (191 aa).

The protein belongs to the RPGRIP1 family. Interacts with NPHP4. Interacts with NEK4. Forms homodimers and elongated homopolymers. Interacts with RPGR. Interacts with SPATA7. Interacts with CEP290/NPHP6; mediating the association between RPGR and CEP290/NPHP6. As to expression, expressed in the retina (at protein level).

The protein localises to the cell projection. It is found in the cilium. Its function is as follows. May function as scaffolding protein. Required for normal location of RPGR at the connecting cilium of photoreceptor cells. Required for normal disk morphogenesis and disk organization in the outer segment of photoreceptor cells and for survival of photoreceptor cells. This is X-linked retinitis pigmentosa GTPase regulator-interacting protein 1 (Rpgrip1) from Mus musculus (Mouse).